The sequence spans 175 residues: Alkyl hydroperoxide reductase AhpD (175 aa).

Cysteine 131 (proton donor) is an active-site residue. The cysteines at positions 131 and 134 are disulfide-linked. Residue cysteine 134 is the Cysteine sulfenic acid (-SOH) intermediate of the active site.

This sequence belongs to the AhpD family.

The catalysed reaction is N(6)-[(R)-dihydrolipoyl]-L-lysyl-[lipoyl-carrier protein] + a hydroperoxide = N(6)-[(R)-lipoyl]-L-lysyl-[lipoyl-carrier protein] + an alcohol + H2O. In terms of biological role, antioxidant protein with alkyl hydroperoxidase activity. Required for the reduction of the AhpC active site cysteine residues and for the regeneration of the AhpC enzyme activity. The sequence is that of Alkyl hydroperoxide reductase AhpD from Brucella abortus (strain 2308).